The chain runs to 104 residues: N(4)-acetylcytidine amidohydrolase (104 aa).

In terms of domain architecture, ASCH spans 6 to 102; sequence ITFYQRFEAD…SEFWVIEIRL (97 aa). Residue lysine 21 is the Proton acceptor of the active site. The Nucleophile role is filled by threonine 24. Glutamate 74 (proton donor) is an active-site residue.

It belongs to the N(4)-acetylcytidine amidohydrolase family.

The enzyme catalyses N(4)-acetylcytidine + H2O = cytidine + acetate + H(+). It carries out the reaction N(4)-acetyl-2'-deoxycytidine + H2O = 2'-deoxycytidine + acetate + H(+). It catalyses the reaction N(4)-acetylcytosine + H2O = cytosine + acetate + H(+). Catalyzes the hydrolysis of N(4)-acetylcytidine (ac4C). The protein is N(4)-acetylcytidine amidohydrolase of Haemophilus influenzae (strain PittEE).